The chain runs to 720 residues: Fatty acid oxidation complex subunit alpha (720 aa).

The tract at residues 1-189 (MIYQGETLSV…KLGLVDAVVA (189 aa)) is enoyl-CoA hydratase/isomerase. D296 contributes to the substrate binding site. The tract at residues 311–720 (QPTKKGVVLG…ESYYTQQVNA (410 aa)) is 3-hydroxyacyl-CoA dehydrogenase. NAD(+)-binding positions include M324, D343, 400-402 (VVE), K407, and S429. The For 3-hydroxyacyl-CoA dehydrogenase activity role is filled by H450. Position 453 (N453) interacts with NAD(+). Substrate contacts are provided by N500 and Y660.

It in the N-terminal section; belongs to the enoyl-CoA hydratase/isomerase family. This sequence in the C-terminal section; belongs to the 3-hydroxyacyl-CoA dehydrogenase family. As to quaternary structure, heterotetramer of two alpha chains (FadB) and two beta chains (FadA).

The catalysed reaction is a (3S)-3-hydroxyacyl-CoA + NAD(+) = a 3-oxoacyl-CoA + NADH + H(+). It carries out the reaction a (3S)-3-hydroxyacyl-CoA = a (2E)-enoyl-CoA + H2O. It catalyses the reaction a 4-saturated-(3S)-3-hydroxyacyl-CoA = a (3E)-enoyl-CoA + H2O. The enzyme catalyses (3S)-3-hydroxybutanoyl-CoA = (3R)-3-hydroxybutanoyl-CoA. The catalysed reaction is a (3Z)-enoyl-CoA = a 4-saturated (2E)-enoyl-CoA. It carries out the reaction a (3E)-enoyl-CoA = a 4-saturated (2E)-enoyl-CoA. It participates in lipid metabolism; fatty acid beta-oxidation. Functionally, involved in the aerobic and anaerobic degradation of long-chain fatty acids via beta-oxidation cycle. Catalyzes the formation of 3-oxoacyl-CoA from enoyl-CoA via L-3-hydroxyacyl-CoA. It can also use D-3-hydroxyacyl-CoA and cis-3-enoyl-CoA as substrate. The sequence is that of Fatty acid oxidation complex subunit alpha from Photobacterium profundum (strain SS9).